We begin with the raw amino-acid sequence, 1181 residues long: Regulator of nonsense transcripts UPF2 (1181 aa).

Coiled-coil stretches lie at residues 6-41 (DESH…NNLN) and 260-309 (HKLL…AEAL). An MIF4G 1 domain is found at 61–264 (TAVIKKLKQI…LLQSEHKLLL (204 aa)). Disordered stretches follow at residues 309-348 (LDMQ…IWDD) and 375-459 (PKSN…KEKG). Basic and acidic residues predominate over residues 375–389 (PKSNEQSAKAKEKLS). Residues 398 to 412 (NQQTTEDTTEVSADS) are compositionally biased toward polar residues. Positions 415-459 (MDDRSNAEQPKEKEEVEKEKAKDTKKEKGKEKDSEKKMEHEKEKG) are enriched in basic and acidic residues. 2 coiled-coil regions span residues 425–451 (KEKE…SEKK) and 539–559 (VQML…MNIE). 2 consecutive MIF4G domains span residues 469–655 (RLLQ…LCKP) and 672–871 (YVRK…NLRP). A binds to UPF3 region spans residues 735–755 (DEFVVAVVDEVLEEIRVGLEL). The span at 893 to 911 (EHASSGDKVSIERHSDTKP) shows a compositional bias: basic and acidic residues. The interval 893–991 (EHASSGDKVS…GPGSDDDKFR (99 aa)) is disordered. Over residues 912 to 926 (SNKSSSDVISSNGKS) the composition is skewed to low complexity. The span at 927-941 (TAKDIRENGEAHGEE) shows a compositional bias: basic and acidic residues. The segment covering 972–985 (GDGDDYDDGDGPGS) has biased composition (acidic residues). Residues 981–1181 (DGPGSDDDKF…GGGSYHARRK (201 aa)) are sufficient for interaction with UPF1 C-terminus. Interaction with UPF1 regions lie at residues 999-1023 (VDLE…EQRK) and 1066-1111 (ENGE…AELE). The interval 999-1102 (VDLEEQADFD…PSDCALVQST (104 aa)) is necessary for interaction with UPF1. Positions 1000 to 1021 (DLEEQADFDQELKALLQESMEQ) form a coiled coil. The interval 1129-1181 (EEANGLGTQILNWTSGGSRGSTRTGEGSGKSGGSRHRFYYHQGGGGSYHARRK) is disordered. Residues 1142–1153 (TSGGSRGSTRTG) show a composition bias toward low complexity.

It belongs to the RENT2 family. As to quaternary structure, found in a post-splicing messenger ribonucleoprotein (mRNP) complex. Associates with the exon junction complex (EJC). Interacts with UPF1 and UPF3.

Its subcellular location is the nucleus. It localises to the nucleolus. The protein localises to the cytoplasm. The protein resides in the perinuclear region. In terms of biological role, recruited by UPF3 associated with the EJC core at the cytoplasmic side of the nuclear envelope and the subsequent formation of an UPF1-UPF2-UPF3 surveillance complex (including UPF1 bound to release factors at the stalled ribosome) is believed to activate NMD. In cooperation with UPF3 stimulates both ATPase and RNA helicase activities of UPF1. Binds spliced mRNA. Involved in nonsense-mediated decay (NMD) of mRNAs containing premature stop codons by associating with the nuclear exon junction complex (EJC). Required for plant development and adaptation to environmental stresses, including plant defense and response to wounding. The polypeptide is Regulator of nonsense transcripts UPF2 (UPF2) (Arabidopsis thaliana (Mouse-ear cress)).